The chain runs to 72 residues: Large ribosomal subunit protein uL29 (72 aa).

The protein belongs to the universal ribosomal protein uL29 family.

The sequence is that of Large ribosomal subunit protein uL29 from Chlamydia caviae (strain ATCC VR-813 / DSM 19441 / 03DC25 / GPIC) (Chlamydophila caviae).